The sequence spans 1358 residues: DNA-directed RNA polymerase subunit beta (1358 aa).

It belongs to the RNA polymerase beta chain family. As to quaternary structure, the RNAP catalytic core consists of 2 alpha, 1 beta, 1 beta' and 1 omega subunit. When a sigma factor is associated with the core the holoenzyme is formed, which can initiate transcription.

The catalysed reaction is RNA(n) + a ribonucleoside 5'-triphosphate = RNA(n+1) + diphosphate. Its function is as follows. DNA-dependent RNA polymerase catalyzes the transcription of DNA into RNA using the four ribonucleoside triphosphates as substrates. The chain is DNA-directed RNA polymerase subunit beta from Francisella tularensis subsp. novicida (strain U112).